Reading from the N-terminus, the 48-residue chain is M-oxotoxin-Ot1c (48 aa).

It localises to the secreted. The protein resides in the target cell membrane. Functionally, disrupts cell membranes, particularly those rich in phosphocholine, through formation of pores. Has antimicrobial activity, hemolytic activity and insecticidal activity. The polypeptide is M-oxotoxin-Ot1c (Oxyopes takobius (Lynx spider)).